Reading from the N-terminus, the 443-residue chain is tRNA-2-methylthio-N(6)-dimethylallyladenosine synthase (443 aa).

The region spanning 12–126 (KTFRVKSFGC…LPEMVADAAA (115 aa)) is the MTTase N-terminal domain. Positions 21, 57, 89, 162, 166, and 169 each coordinate [4Fe-4S] cluster. In terms of domain architecture, Radical SAM core spans 148-380 (RKSAPTAFLT…QAALNRDQLA (233 aa)). Positions 383–443 (KASVGKTCEV…GPNSISGRLA (61 aa)) constitute a TRAM domain.

The protein belongs to the methylthiotransferase family. MiaB subfamily. Monomer. It depends on [4Fe-4S] cluster as a cofactor.

The protein resides in the cytoplasm. It carries out the reaction N(6)-dimethylallyladenosine(37) in tRNA + (sulfur carrier)-SH + AH2 + 2 S-adenosyl-L-methionine = 2-methylsulfanyl-N(6)-dimethylallyladenosine(37) in tRNA + (sulfur carrier)-H + 5'-deoxyadenosine + L-methionine + A + S-adenosyl-L-homocysteine + 2 H(+). Catalyzes the methylthiolation of N6-(dimethylallyl)adenosine (i(6)A), leading to the formation of 2-methylthio-N6-(dimethylallyl)adenosine (ms(2)i(6)A) at position 37 in tRNAs that read codons beginning with uridine. The protein is tRNA-2-methylthio-N(6)-dimethylallyladenosine synthase of Novosphingobium aromaticivorans (strain ATCC 700278 / DSM 12444 / CCUG 56034 / CIP 105152 / NBRC 16084 / F199).